A 108-amino-acid polypeptide reads, in one-letter code: UPF0145 protein Fnod_0426 (108 aa).

It belongs to the UPF0145 family.

The polypeptide is UPF0145 protein Fnod_0426 (Fervidobacterium nodosum (strain ATCC 35602 / DSM 5306 / Rt17-B1)).